The sequence spans 331 residues: L-lactate dehydrogenase A chain (331 aa).

Residues 29-57 and arginine 98 each bind NAD(+); that span reads GMVGMASAISILLKDLCDELAMVDVMEDK. 3 residues coordinate substrate: arginine 105, asparagine 137, and arginine 168. Position 137 (asparagine 137) interacts with NAD(+). Catalysis depends on histidine 192, which acts as the Proton acceptor. Residue threonine 247 coordinates substrate.

Belongs to the LDH/MDH superfamily. LDH family. In terms of assembly, homotetramer.

It is found in the cytoplasm. The enzyme catalyses (S)-lactate + NAD(+) = pyruvate + NADH + H(+). It functions in the pathway fermentation; pyruvate fermentation to lactate; (S)-lactate from pyruvate: step 1/1. Its function is as follows. Interconverts simultaneously and stereospecifically pyruvate and lactate with concomitant interconversion of NADH and NAD(+). This is L-lactate dehydrogenase A chain (ldha) from Parachaenichthys charcoti (Charcot's dragonfish).